A 223-amino-acid polypeptide reads, in one-letter code: Small ribosomal subunit protein uS5 (223 aa).

The segment at 1-66 is disordered; that stretch reads MPPQQQRGRG…AERAQAETEF (66 aa). Positions 13-22 are enriched in gly residues; sequence RGPGGPGGPG. Basic and acidic residues predominate over residues 53 to 66; sequence GGDKAERAQAETEF. The region spanning 66-129 is the S5 DRBM domain; sequence FQERVVQIRR…SDARKALIRV (64 aa).

It belongs to the universal ribosomal protein uS5 family. In terms of assembly, part of the 30S ribosomal subunit. Contacts proteins S4 and S8.

Functionally, with S4 and S12 plays an important role in translational accuracy. Located at the back of the 30S subunit body where it stabilizes the conformation of the head with respect to the body. The sequence is that of Small ribosomal subunit protein uS5 from Gloeobacter violaceus (strain ATCC 29082 / PCC 7421).